Consider the following 261-residue polypeptide: MWFLILFLALSLGGIDAAPPVQSRIVGGFKCEKNSQPWQVAVYYHKEHICGGVLLDRNWVLTAAHCYVDECEVWLGKNQLFQEEPSAQNRLVSKSFPHPGFNMTLLTFEKLPPGADFSNDLMLLRLSKPADITDVVKPIDLPTKEPKLDSTCLVSGWGSITPTKWQKPDDLQCMFTKLLPNENCAKAYLLKVTDVMLCTIEMGEDKGPCVGDSGGPLICDGVLQGTVSIGPDPCGIPGVSAIYTNLVKFNSWIKDTMMKNA.

Residues 1–18 form the signal peptide; that stretch reads MWFLILFLALSLGGIDAA. The propeptide at 19-24 is activation peptide; it reads PPVQSR. Residues 25–258 enclose the Peptidase S1 domain; the sequence is IVGGFKCEKN…FNSWIKDTMM (234 aa). Cystine bridges form between Cys-31–Cys-173, Cys-50–Cys-66, Cys-152–Cys-219, Cys-184–Cys-198, and Cys-209–Cys-234. His-65 (charge relay system) is an active-site residue. Asn-102 carries an N-linked (GlcNAc...) asparagine glycan. Residue Asp-120 is the Charge relay system of the active site. Ser-213 functions as the Charge relay system in the catalytic mechanism.

Belongs to the peptidase S1 family. Kallikrein subfamily.

The catalysed reaction is Cleavage of the Leu-|-Leu bond in synthetic tetradecapeptide renin substrate, to produce angiotensin I, but not active on natural angiotensinogen. Also hydrolyzes Bz-Arg-p-nitroanilide.. The polypeptide is Kallikrein 1-related peptidase b16 (Klk1b16) (Mus musculus (Mouse)).